The following is a 109-amino-acid chain: MFGKGGLGNLMKQAQQMQDKMQKMQEEIASLEVTGESGAGLVKVTINGAHNCRRVEIDPSLMEDDKEMLEDLIAAAFNDAARRIEETQKEKMAGISSGMQLPPGFKMPF.

Disordered regions lie at residues 1–23 (MFGKGGLGNLMKQAQQMQDKMQK) and 89–109 (KEKMAGISSGMQLPPGFKMPF).

Belongs to the YbaB/EbfC family. Homodimer.

It localises to the cytoplasm. Its subcellular location is the nucleoid. In terms of biological role, binds to DNA and alters its conformation. May be involved in regulation of gene expression, nucleoid organization and DNA protection. This is Nucleoid-associated protein plu3840 from Photorhabdus laumondii subsp. laumondii (strain DSM 15139 / CIP 105565 / TT01) (Photorhabdus luminescens subsp. laumondii).